Reading from the N-terminus, the 326-residue chain is Thioredoxin reductase (326 aa).

40–47 provides a ligand contact to FAD; it reads TGNNKGGQ. Cysteine 141 and cysteine 144 form a disulfide bridge. FAD is bound at residue 291–300; it reads DVIDHVYKQA.

The protein belongs to the class-II pyridine nucleotide-disulfide oxidoreductase family. Homodimer. Requires FAD as cofactor.

The protein localises to the cytoplasm. It carries out the reaction [thioredoxin]-dithiol + NADP(+) = [thioredoxin]-disulfide + NADPH + H(+). The polypeptide is Thioredoxin reductase (trxB) (Buchnera aphidicola subsp. Baizongia pistaciae (strain Bp)).